The following is a 186-amino-acid chain: Ribosome-recycling factor (186 aa).

This sequence belongs to the RRF family.

It is found in the cytoplasm. In terms of biological role, responsible for the release of ribosomes from messenger RNA at the termination of protein biosynthesis. May increase the efficiency of translation by recycling ribosomes from one round of translation to another. The chain is Ribosome-recycling factor from Coprothermobacter proteolyticus (strain ATCC 35245 / DSM 5265 / OCM 4 / BT).